The following is a 176-amino-acid chain: Prion-like protein doppel (176 aa).

The N-terminal stretch at 1–25 is a signal peptide; the sequence is MRKHLSWWWLATVCMLLFSHLSAVQ. The flexible tail stretch occupies residues 27-50; it reads RGIKHRIKWNRKALPSTAQITEAQ. Thr-43 carries O-linked (GalNAc...) threonine glycosylation. A globular region spans residues 51-152; it reads VAENRPGAFI…KHCEFWLERG (102 aa). Cystine bridges form between Cys-94–Cys-145 and Cys-108–Cys-140. Residues Asn-98 and Asn-110 are each glycosylated (N-linked (GlcNAc...) asparagine). Residues 122 to 139 are cu(2+) binding; the sequence is KPDNKLHQQVLWRLVQEL. The GPI-anchor amidated glycine moiety is linked to residue Gly-152. Positions 153 to 176 are cleaved as a propeptide — removed in mature form; the sequence is AGLRVTMHQPVLLCLLALIWLTVK.

Belongs to the prion family. In terms of processing, N-glycosylated. N-glycosylated at two distinct sites. O-glycosylated. In terms of tissue distribution, expressed in testis, in Sertoli cells, ejaculated spermatozoa and in seminal fluid (at protein level).

It is found in the cell membrane. In terms of biological role, required for normal acrosome reaction and for normal male fertility. Can bind Cu(2+). This Homo sapiens (Human) protein is Prion-like protein doppel (PRND).